A 427-amino-acid chain; its full sequence is Histidinol dehydrogenase (427 aa).

Residues Tyr123, Gln185, and Asn208 each contribute to the NAD(+) site. Ser231, Gln253, and His256 together coordinate substrate. Zn(2+) is bound by residues Gln253 and His256. Catalysis depends on proton acceptor residues Glu321 and His322. Positions 322, 355, 409, and 414 each coordinate substrate. Asp355 serves as a coordination point for Zn(2+). His414 lines the Zn(2+) pocket.

Belongs to the histidinol dehydrogenase family. Zn(2+) serves as cofactor.

It catalyses the reaction L-histidinol + 2 NAD(+) + H2O = L-histidine + 2 NADH + 3 H(+). It functions in the pathway amino-acid biosynthesis; L-histidine biosynthesis; L-histidine from 5-phospho-alpha-D-ribose 1-diphosphate: step 9/9. In terms of biological role, catalyzes the sequential NAD-dependent oxidations of L-histidinol to L-histidinaldehyde and then to L-histidine. The polypeptide is Histidinol dehydrogenase (Oceanobacillus iheyensis (strain DSM 14371 / CIP 107618 / JCM 11309 / KCTC 3954 / HTE831)).